Consider the following 274-residue polypeptide: Indole-3-glycerol phosphate synthase (274 aa).

Belongs to the TrpC family.

It carries out the reaction 1-(2-carboxyphenylamino)-1-deoxy-D-ribulose 5-phosphate + H(+) = (1S,2R)-1-C-(indol-3-yl)glycerol 3-phosphate + CO2 + H2O. It participates in amino-acid biosynthesis; L-tryptophan biosynthesis; L-tryptophan from chorismate: step 4/5. The sequence is that of Indole-3-glycerol phosphate synthase from Kineococcus radiotolerans (strain ATCC BAA-149 / DSM 14245 / SRS30216).